A 370-amino-acid chain; its full sequence is Protein commissureless 1 (370 aa).

Over 1 to 136 (MISTTDYPTV…DADMHVIINY (136 aa)) the chain is Extracellular. A required for vesicular localization region spans residues 108–131 (LRDRSEESGESSWWSQIFGDADMH). Residues 137-157 (LWIGVVSSLVILSLVFILFSC) form a helical membrane-spanning segment. Topologically, residues 158 to 370 (YFYRKFRTWK…CASLVVVVAA (213 aa)) are cytoplasmic. 2 consecutive short sequence motifs (PY-motif) follow at residues 220–223 (PPCY) and 229–232 (LPSY). The interaction with Nedd4 stretch occupies residues 227 to 237 (TGLPSYDEALH). The tract at residues 287–312 (VEEDKADSSSSTSASASPSSSESSNL) is disordered. Residues 294 to 312 (SSSSTSASASPSSSESSNL) are compositionally biased toward low complexity.

This sequence belongs to the commissureless family. As to quaternary structure, interacts (probably via PY-motifs) with Nedd4 (via WW2 domain). Interacts with Robo. Post-translationally, ubiquitinated by Nedd4; which promotes endocytosis of the comm/robo complex and comm proteasomal degradation. Not ubiquitinated by Nedd4.

The protein localises to the cytoplasmic vesicle membrane. It localises to the cell membrane. In terms of biological role, controls axon guidance across the CNS midline by preventing the delivery of Robo to the growth cone. The chain is Protein commissureless 1 from Drosophila melanogaster (Fruit fly).